The sequence spans 304 residues: Non-specific ribonucleoside hydrolase RihC (304 aa).

His-233 is an active-site residue.

Belongs to the IUNH family. RihC subfamily.

In terms of biological role, hydrolyzes both purine and pyrimidine ribonucleosides with a broad-substrate specificity. The sequence is that of Non-specific ribonucleoside hydrolase RihC from Klebsiella pneumoniae subsp. pneumoniae (strain ATCC 700721 / MGH 78578).